Consider the following 459-residue polypeptide: Cysteine--tRNA ligase (459 aa).

Cys-28 provides a ligand contact to Zn(2+). Positions 30–40 (VTVYDLCHFGH) match the 'HIGH' region motif. 3 residues coordinate Zn(2+): Cys-209, His-234, and Glu-238. Residues 266–270 (KMSKS) carry the 'KMSKS' region motif. An ATP-binding site is contributed by Lys-269.

Belongs to the class-I aminoacyl-tRNA synthetase family. In terms of assembly, monomer. It depends on Zn(2+) as a cofactor.

It is found in the cytoplasm. The enzyme catalyses tRNA(Cys) + L-cysteine + ATP = L-cysteinyl-tRNA(Cys) + AMP + diphosphate. This is Cysteine--tRNA ligase from Actinobacillus succinogenes (strain ATCC 55618 / DSM 22257 / CCUG 43843 / 130Z).